The primary structure comprises 310 residues: Mitochondrial citrate transporter F (310 aa).

3 Solcar repeats span residues 23–108 (KKVH…LKNH), 115–207 (PPGL…FKRL), and 216–303 (DNMG…HKKL). Helical transmembrane passes span 29-49 (FWFG…LDLV), 85-105 (SAAI…YEEL), 122-142 (IGMA…ADVL), 186-206 (NSTR…TFKR), 222-242 (FTAS…VDVI), and 275-296 (AFRG…TFIF).

The protein belongs to the mitochondrial carrier (TC 2.A.29) family.

It is found in the mitochondrion inner membrane. Mitochondrial transporter that does not mediate citrate export from mitochondria to cytoplasm. Its exact function has still to be determined. This Aspergillus niger (strain ATCC 1015 / CBS 113.46 / FGSC A1144 / LSHB Ac4 / NCTC 3858a / NRRL 328 / USDA 3528.7) protein is Mitochondrial citrate transporter F.